Here is a 221-residue protein sequence, read N- to C-terminus: Octanoyltransferase (221 aa).

Residues 36–221 (KKEDNQLFFC…LRSIFMEIFA (186 aa)) form the BPL/LPL catalytic domain. Residues 81-88 (RGGDITYH), 154-156 (AIG), and 167-169 (GFA) contribute to the substrate site. Cys-185 (acyl-thioester intermediate) is an active-site residue.

It belongs to the LipB family.

Its subcellular location is the cytoplasm. The enzyme catalyses octanoyl-[ACP] + L-lysyl-[protein] = N(6)-octanoyl-L-lysyl-[protein] + holo-[ACP] + H(+). It functions in the pathway protein modification; protein lipoylation via endogenous pathway; protein N(6)-(lipoyl)lysine from octanoyl-[acyl-carrier-protein]: step 1/2. Its function is as follows. Catalyzes the transfer of endogenously produced octanoic acid from octanoyl-acyl-carrier-protein onto the lipoyl domains of lipoate-dependent enzymes. Lipoyl-ACP can also act as a substrate although octanoyl-ACP is likely to be the physiological substrate. The chain is Octanoyltransferase from Parabacteroides distasonis (strain ATCC 8503 / DSM 20701 / CIP 104284 / JCM 5825 / NCTC 11152).